We begin with the raw amino-acid sequence, 158 residues long: Putative 4-hydroxy-4-methyl-2-oxoglutarate aldolase (158 aa).

Substrate-binding positions include 75-78 and arginine 97; that span reads GDLI. Residue aspartate 98 participates in a divalent metal cation binding.

This sequence belongs to the class II aldolase/RraA-like family. As to quaternary structure, homotrimer. A divalent metal cation is required as a cofactor.

The catalysed reaction is 4-hydroxy-4-methyl-2-oxoglutarate = 2 pyruvate. The enzyme catalyses oxaloacetate + H(+) = pyruvate + CO2. In terms of biological role, catalyzes the aldol cleavage of 4-hydroxy-4-methyl-2-oxoglutarate (HMG) into 2 molecules of pyruvate. Also contains a secondary oxaloacetate (OAA) decarboxylase activity due to the common pyruvate enolate transition state formed following C-C bond cleavage in the retro-aldol and decarboxylation reactions. In Saccharopolyspora erythraea (strain ATCC 11635 / DSM 40517 / JCM 4748 / NBRC 13426 / NCIMB 8594 / NRRL 2338), this protein is Putative 4-hydroxy-4-methyl-2-oxoglutarate aldolase.